We begin with the raw amino-acid sequence, 52 residues long: Sperm protamine P1 (52 aa).

Positions 1–27 (MARYSCCRSHSRSRSRRRRQRCRRRRR) are disordered. The span at 9–27 (SHSRSRSRRRRQRCRRRRR) shows a compositional bias: basic residues.

This sequence belongs to the protamine P1 family. In terms of tissue distribution, testis.

It is found in the nucleus. It localises to the chromosome. Its function is as follows. Protamines substitute for histones in the chromatin of sperm during the haploid phase of spermatogenesis. They compact sperm DNA into a highly condensed, stable and inactive complex. The chain is Sperm protamine P1 (PRM1) from Rhinolophus ferrumequinum (Greater horseshoe bat).